The sequence spans 1084 residues: Probable hemoglobin and hemoglobin-haptoglobin-binding protein 3 (1084 aa).

The signal sequence occupies residues 1-24 (MTNFKFSLLACSIAFALNASTVYA). 12 repeat units span residues 26 to 29 (QPTN), 30 to 33 (QPTN), 34 to 37 (QPTN), 38 to 41 (QPTN), 42 to 45 (QPTN), 46 to 49 (QPTN), 50 to 53 (QPTN), 54 to 57 (QPTN), 58 to 61 (QPTN), 62 to 65 (QPTN), 66 to 69 (QPTN), and 70 to 73 (QPTN). The segment at 26–73 (QPTNQPTNQPTNQPTNQPTNQPTNQPTNQPTNQPTNQPTNQPTNQPTN) is 12 X 4 AA tandem repeats of Q-P-T-N. Positions 26-75 (QPTNQPTNQPTNQPTNQPTNQPTNQPTNQPTNQPTNQPTNQPTNQPTNQN) are enriched in low complexity. The disordered stretch occupies residues 26–77 (QPTNQPTNQPTNQPTNQPTNQPTNQPTNQPTNQPTNQPTNQPTNQPTNQNSN). The short motif at 83–90 (EQINVSGS) is the TonB box element. Residues 95–220 (NIKEKKVGET…LGGSVIFETK (126 aa)) enclose the TBDR plug domain. The TBDR beta-barrel domain maps to 228–1084 (DKDYYLSYKR…NYRMSVQFEF (857 aa)). The short motif at 1067-1084 (NRFYAPGRNYRMSVQFEF) is the TonB C-terminal box element.

The protein belongs to the TonB-dependent receptor family. Hemoglobin/haptoglobin binding protein subfamily.

The protein localises to the cell outer membrane. Acts as a receptor for hemoglobin or the hemoglobin/haptoglobin complex of the human host and is required for heme uptake. This Haemophilus influenzae (strain ATCC 51907 / DSM 11121 / KW20 / Rd) protein is Probable hemoglobin and hemoglobin-haptoglobin-binding protein 3.